The sequence spans 382 residues: Flap endonuclease 1 (382 aa).

Residues 1-105 (MGIKGLNAII…HELTKRSSRR (105 aa)) form an N-domain region. Aspartate 34 lines the Mg(2+) pocket. Positions 47 and 71 each coordinate DNA. Residues aspartate 87, glutamate 156, glutamate 158, aspartate 177, and aspartate 179 each coordinate Mg(2+). An I-domain region spans residues 120-251 (EKMKQERRLV…VTALKLIKTH (132 aa)). Glutamate 156 lines the DNA pocket. Residues glycine 229 and aspartate 231 each coordinate DNA. Aspartate 231 contributes to the Mg(2+) binding site. The interaction with PCNA stretch occupies residues 339 to 347 (IQGRLDGFF). The tract at residues 358–382 (AAAAKRAQENKKLNKNKNKVTKGRR) is disordered. Basic residues predominate over residues 370–382 (LNKNKNKVTKGRR).

It belongs to the XPG/RAD2 endonuclease family. FEN1 subfamily. Interacts with PCNA. Three molecules of RAD27 bind to one PCNA trimer with each molecule binding to one PCNA monomer. PCNA stimulates the nuclease activity without altering cleavage specificity. Mg(2+) serves as cofactor. Phosphorylated. Phosphorylation upon DNA damage induces relocalization to the nuclear plasma.

The protein localises to the nucleus. It is found in the nucleolus. The protein resides in the nucleoplasm. Its subcellular location is the mitochondrion. Functionally, structure-specific nuclease with 5'-flap endonuclease and 5'-3' exonuclease activities involved in DNA replication and repair. During DNA replication, cleaves the 5'-overhanging flap structure that is generated by displacement synthesis when DNA polymerase encounters the 5'-end of a downstream Okazaki fragment. It enters the flap from the 5'-end and then tracks to cleave the flap base, leaving a nick for ligation. Also involved in the long patch base excision repair (LP-BER) pathway, by cleaving within the apurinic/apyrimidinic (AP) site-terminated flap. Acts as a genome stabilization factor that prevents flaps from equilibrating into structures that lead to duplications and deletions. Also possesses 5'-3' exonuclease activity on nicked or gapped double-stranded DNA, and exhibits RNase H activity. Also involved in replication and repair of rDNA and in repairing mitochondrial DNA. The chain is Flap endonuclease 1 from Saccharomyces cerevisiae (strain RM11-1a) (Baker's yeast).